Reading from the N-terminus, the 124-residue chain is Histone H2B 1/2 (124 aa).

Residues 1–32 (MPEPAKAAPKKGSKKAVTKTAGKGGKKRKRTR) form a disordered region. Lys6 and Lys11 each carry N6-acetyllysine. Over residues 8–17 (APKKGSKKAV) the composition is skewed to basic residues. Ser13 bears the Phosphoserine mark. An N6-acetyllysine mark is found at Lys14 and Lys19. Residue Ser111 is glycosylated (O-linked (GlcNAc) serine). A Glycyl lysine isopeptide (Lys-Gly) (interchain with G-Cter in ubiquitin) cross-link involves residue Lys119.

This sequence belongs to the histone H2B family. In terms of assembly, the nucleosome is a histone octamer containing two molecules each of H2A, H2B, H3 and H4 assembled in one H3-H4 heterotetramer and two H2A-H2B heterodimers. The octamer wraps approximately 147 bp of DNA. Post-translationally, monoubiquitination of Lys-119 by the BRE1 gives a specific tag for epigenetic transcriptional activation and is also prerequisite for histone H3 'Lys-4' and 'Lys-79' methylation. In terms of processing, phosphorylated during apoptosis; which facilitates apoptotic chromatin condensation. GlcNAcylation at Ser-111 promotes monoubiquitination of Lys-119. It fluctuates in response to extracellular glucose, and associates with transcribed genes.

The protein resides in the nucleus. It is found in the chromosome. Core component of nucleosome. Nucleosomes wrap and compact DNA into chromatin, limiting DNA accessibility to the cellular machineries which require DNA as a template. Histones thereby play a central role in transcription regulation, DNA repair, DNA replication and chromosomal stability. DNA accessibility is regulated via a complex set of post-translational modifications of histones, also called histone code, and nucleosome remodeling. The chain is Histone H2B 1/2 from Danio rerio (Zebrafish).